A 1039-amino-acid polypeptide reads, in one-letter code: Translation initiation factor IF-2 (1039 aa).

2 disordered regions span residues 39 to 347 (TISE…KWQE) and 400 to 452 (ARPP…PEKV). Over residues 103 to 125 (RNTTSNAPEASVANNQIASSEAN) the composition is skewed to polar residues. Positions 157-176 (PQKPAAPEAEPEAQSQAPAK) are enriched in low complexity. Composition is skewed to basic and acidic residues over residues 178–197 (AVEK…ERQP) and 226–243 (PILK…DQAK). The span at 408–423 (ARSASAATAAPISSPT) shows a compositional bias: low complexity. Over residues 432-451 (NNRDQNRRQETEVKRERPEK) the composition is skewed to basic and acidic residues. In terms of domain architecture, tr-type G spans 533–706 (RRPPVVTIMG…LLVAEVGELS (174 aa)). Positions 542–549 (GHVDHGKT) are G1. 542-549 (GHVDHGKT) contributes to the GTP binding site. A G2 region spans residues 567-571 (GITQH). The interval 592–595 (DTPG) is G3. Residues 592-596 (DTPGH) and 646-649 (NKID) contribute to the GTP site. Residues 646–649 (NKID) form a G4 region. The G5 stretch occupies residues 682 to 684 (SAI).

This sequence belongs to the TRAFAC class translation factor GTPase superfamily. Classic translation factor GTPase family. IF-2 subfamily.

The protein localises to the cytoplasm. In terms of biological role, one of the essential components for the initiation of protein synthesis. Protects formylmethionyl-tRNA from spontaneous hydrolysis and promotes its binding to the 30S ribosomal subunits. Also involved in the hydrolysis of GTP during the formation of the 70S ribosomal complex. The polypeptide is Translation initiation factor IF-2 (Nostoc sp. (strain PCC 7120 / SAG 25.82 / UTEX 2576)).